The chain runs to 65 residues: MLTLQSSGTGQRKVAVHMGLLENISLKISKEVGGLYDTRMAQQGQLLKLLVGTVRKWDHSFFMDL.

This Mus musculus (Mouse) protein is Putative per-hexamer repeat protein 2 (Phxr2).